The primary structure comprises 352 residues: Ferredoxin--NADP reductase 2 (352 aa).

The FAD site is built by E36, K44, Y48, I88, L123, D290, and S331.

This sequence belongs to the ferredoxin--NADP reductase type 2 family. In terms of assembly, homodimer. Requires FAD as cofactor.

The enzyme catalyses 2 reduced [2Fe-2S]-[ferredoxin] + NADP(+) + H(+) = 2 oxidized [2Fe-2S]-[ferredoxin] + NADPH. The chain is Ferredoxin--NADP reductase 2 from Exiguobacterium sibiricum (strain DSM 17290 / CCUG 55495 / CIP 109462 / JCM 13490 / 255-15).